The sequence spans 53 residues: Large ribosomal subunit protein eL40 (53 aa).

This sequence belongs to the eukaryotic ribosomal protein eL40 family.

This chain is Large ribosomal subunit protein eL40, found in Pyrobaculum aerophilum (strain ATCC 51768 / DSM 7523 / JCM 9630 / CIP 104966 / NBRC 100827 / IM2).